The following is a 249-amino-acid chain: MYSRYSAYNYSPHLGKTYVYDNKYYKNLGHVIKNAKRKHDALEREADERELDHLDKYLVAEDPFMGPGKNQKLTLFKEIRNVKPDTMKLIVNWNGKEFLRETWTRFMEDSFPIVNDQEVMDVFLVVNMRPTRPNRCFRFLAQHALRCDPEYVPHDVIRIVEPSYVGTNNEYRISLAKKGGGCPVMNLHAEYTTSFESFIDKVIWYNFYKPIVYVGTDSAEEEEILLEVSLVFKIKEFAPDAPLYTGPAY.

Belongs to the polyhedrin family.

Its function is as follows. Major component of the virus occlusion bodies, which are large proteinaceous structures (polyhedra), that protect the virus from the outside environment for extended periods until they are ingested by insect larvae. This Lepidoptera (butterflies and moths) protein is Polyhedrin (PH).